The chain runs to 113 residues: UPF0342 protein SpyM3_0545 (113 aa).

It belongs to the UPF0342 family.

The sequence is that of UPF0342 protein SpyM3_0545 from Streptococcus pyogenes serotype M3 (strain ATCC BAA-595 / MGAS315).